The primary structure comprises 350 residues: Major allergen Mal f 1 (350 aa).

The N-terminal stretch at 1 to 22 is a signal peptide; sequence MRYSTVLAALALLGTSAVSVLA.

Its subcellular location is the secreted. It is found in the cell wall. The sequence is that of Major allergen Mal f 1 from Malassezia furfur (Pityriasis versicolor infection agent).